We begin with the raw amino-acid sequence, 175 residues long: Sec-independent protein translocase protein TatB (175 aa).

The helical transmembrane segment at M1 to G21 threads the bilayer. A compositionally biased stretch (low complexity) spans G99 to D115. A disordered region spans residues G99 to S118.

This sequence belongs to the TatB family. The Tat system comprises two distinct complexes: a TatABC complex, containing multiple copies of TatA, TatB and TatC subunits, and a separate TatA complex, containing only TatA subunits. Substrates initially bind to the TatABC complex, which probably triggers association of the separate TatA complex to form the active translocon.

The protein resides in the cell inner membrane. Its function is as follows. Part of the twin-arginine translocation (Tat) system that transports large folded proteins containing a characteristic twin-arginine motif in their signal peptide across membranes. Together with TatC, TatB is part of a receptor directly interacting with Tat signal peptides. TatB may form an oligomeric binding site that transiently accommodates folded Tat precursor proteins before their translocation. The sequence is that of Sec-independent protein translocase protein TatB from Burkholderia thailandensis (strain ATCC 700388 / DSM 13276 / CCUG 48851 / CIP 106301 / E264).